Here is a 500-residue protein sequence, read N- to C-terminus: MTEQVQDENKLIAERRAKLEHIRENCPANGHPNTFDRKHKAADIQAEFGNNTKEELEGMGIVRSIAGRVMAKRGPFLVIQDVSGRIQAYAGKDVQKDLKAKFQGLDIGDIIGVTGQLHLSGKGDLYVNMEEYELLTKALRPLPEKFHGLTDQETRYRQRYIDLIVNEESREAFIMRSKVVSAIRNFMVKKEFMEVETPMMHTIPGGASARPFETHHNALDIAMYLRIAPELYLKRLVVGGFERVFEINRNFRNEGLSPRHNPEFTMMEFYMAYSDYKDLMDLTEEMLSSIATELCGSPKLPYGEHVVDFGGPYARLSMLDAIKKYNPDNATIQSMTYEEVKDVEFMRNLAKSLGMTIEKFWTCGQLLEEIFGETAETQLMQPTFITGYPADISPLARRNDDNHFITDRFEFFIGGREVANGFSELNDAEDQDNRFKAQVDAKDAGDDEAMFYDADYITALEHGLPPTAGQGIGIDRLVMLFTNTHTIRDVILFPAMRPQG.

Residues E410 and E417 each contribute to the Mg(2+) site.

The protein belongs to the class-II aminoacyl-tRNA synthetase family. Homodimer. It depends on Mg(2+) as a cofactor.

It is found in the cytoplasm. The enzyme catalyses tRNA(Lys) + L-lysine + ATP = L-lysyl-tRNA(Lys) + AMP + diphosphate. This chain is Lysine--tRNA ligase, found in Shewanella sediminis (strain HAW-EB3).